A 598-amino-acid polypeptide reads, in one-letter code: Tail knob protein gp9 (598 aa).

It belongs to the picovirinae distal tube protein family. Homohexamer; forms a hexameric tube structure with six flexible hydrophobic loops.

Its subcellular location is the virion. Its function is as follows. Distal (knob) tail protein that plugs the end of the tube before DNA ejection and forms a channel perforating the host membrane during ejection. This is Tail knob protein gp9 (9) from Bacillus subtilis (Bacteriophage B103).